We begin with the raw amino-acid sequence, 301 residues long: Sulfate adenylyltransferase subunit 2 (301 aa).

Belongs to the PAPS reductase family. CysD subfamily. As to quaternary structure, heterodimer composed of CysD, the smaller subunit, and CysN.

It carries out the reaction sulfate + ATP + H(+) = adenosine 5'-phosphosulfate + diphosphate. It participates in sulfur metabolism; hydrogen sulfide biosynthesis; sulfite from sulfate: step 1/3. With CysN forms the ATP sulfurylase (ATPS) that catalyzes the adenylation of sulfate producing adenosine 5'-phosphosulfate (APS) and diphosphate, the first enzymatic step in sulfur assimilation pathway. APS synthesis involves the formation of a high-energy phosphoric-sulfuric acid anhydride bond driven by GTP hydrolysis by CysN coupled to ATP hydrolysis by CysD. The sequence is that of Sulfate adenylyltransferase subunit 2 from Trichlorobacter lovleyi (strain ATCC BAA-1151 / DSM 17278 / SZ) (Geobacter lovleyi).